We begin with the raw amino-acid sequence, 80 residues long: Ataxin-8 (80 aa).

As to expression, specifically found in brains from SCA8 patients (at protein level).

It is found in the nucleus. The polypeptide is Ataxin-8 (ATXN8) (Homo sapiens (Human)).